The primary structure comprises 208 residues: Small ribosomal subunit protein uS3 (208 aa).

Residues 17-86 form the KH type-2 domain; that stretch reads IDEYLEKELR…NPQIEVEEIK (70 aa).

The protein belongs to the universal ribosomal protein uS3 family. In terms of assembly, part of the 30S ribosomal subunit.

Functionally, binds the lower part of the 30S subunit head. The sequence is that of Small ribosomal subunit protein uS3 from Thermococcus onnurineus (strain NA1).